We begin with the raw amino-acid sequence, 540 residues long: Chaperonin GroEL 3 (540 aa).

ATP contacts are provided by residues 30-33 (TLGP), lysine 51, 87-91 (DGTTT), glycine 415, 479-481 (NAA), and aspartate 495.

The protein belongs to the chaperonin (HSP60) family. In terms of assembly, forms a cylinder of 14 subunits composed of two heptameric rings stacked back-to-back. Interacts with the co-chaperonin GroES.

Its subcellular location is the cytoplasm. It catalyses the reaction ATP + H2O + a folded polypeptide = ADP + phosphate + an unfolded polypeptide.. Functionally, together with its co-chaperonin GroES, plays an essential role in assisting protein folding. The GroEL-GroES system forms a nano-cage that allows encapsulation of the non-native substrate proteins and provides a physical environment optimized to promote and accelerate protein folding. In Burkholderia cenocepacia (strain HI2424), this protein is Chaperonin GroEL 3.